The chain runs to 388 residues: G2/mitotic-specific cyclin-B (388 aa).

Belongs to the cyclin family. Cyclin AB subfamily. As to quaternary structure, interacts with the CDK1 protein kinase to form a serine/threonine kinase holoenzyme complex also known as maturation promoting factor (MPF). The cyclin subunit imparts substrate specificity to the complex.

In terms of biological role, essential for the control of the cell cycle at the G2/M (mitosis) transition. The protein is G2/mitotic-specific cyclin-B of Marthasterias glacialis (Spiny starfish).